The primary structure comprises 246 residues: Pyridoxine 5'-phosphate synthase (246 aa).

3-amino-2-oxopropyl phosphate-binding residues include Asn8 and Arg19. His44 (proton acceptor) is an active-site residue. Residues Arg46 and His51 each contribute to the 1-deoxy-D-xylulose 5-phosphate site. Residue Glu76 is the Proton acceptor of the active site. Thr106 serves as a coordination point for 1-deoxy-D-xylulose 5-phosphate. The active-site Proton donor is the His198. 3-amino-2-oxopropyl phosphate is bound by residues Asp199 and 221 to 222 (GH).

Belongs to the PNP synthase family. Homooctamer; tetramer of dimers.

The protein resides in the cytoplasm. The enzyme catalyses 3-amino-2-oxopropyl phosphate + 1-deoxy-D-xylulose 5-phosphate = pyridoxine 5'-phosphate + phosphate + 2 H2O + H(+). The protein operates within cofactor biosynthesis; pyridoxine 5'-phosphate biosynthesis; pyridoxine 5'-phosphate from D-erythrose 4-phosphate: step 5/5. Functionally, catalyzes the complicated ring closure reaction between the two acyclic compounds 1-deoxy-D-xylulose-5-phosphate (DXP) and 3-amino-2-oxopropyl phosphate (1-amino-acetone-3-phosphate or AAP) to form pyridoxine 5'-phosphate (PNP) and inorganic phosphate. This chain is Pyridoxine 5'-phosphate synthase, found in Brucella abortus (strain S19).